We begin with the raw amino-acid sequence, 148 residues long: UPF0756 membrane protein YeaL (148 aa).

The next 4 membrane-spanning stretches (helical) occupy residues 14–34 (ALGFISHNTTVAVSILVLIIV), 51–71 (LTVGIIILTIGVMAPIASGTL), 86–106 (LVAIAVGVFVSWLGGRGITLM), and 121–141 (VLGVALFRGVPVGPLIAAGLV).

This sequence belongs to the UPF0756 family.

It is found in the cell membrane. The sequence is that of UPF0756 membrane protein YeaL from Salmonella choleraesuis (strain SC-B67).